A 45-amino-acid chain; its full sequence is Thymosin beta-15A (45 aa).

Basic and acidic residues-rich tracts occupy residues 1 to 27 (MSDKPDLSEVEKFDRSKLKKTNTEEKN) and 35 to 45 (IQQEKECVQTS). Positions 1-45 (MSDKPDLSEVEKFDRSKLKKTNTEEKNTLPSKETIQQEKECVQTS) are disordered.

It belongs to the thymosin beta family. In terms of tissue distribution, neuroblastoma-specific.

It localises to the cytoplasm. Its subcellular location is the cytoskeleton. Plays an important role in the organization of the cytoskeleton. Binds to and sequesters actin monomers (G actin) and therefore inhibits actin polymerization. This Homo sapiens (Human) protein is Thymosin beta-15A (TMSB15A).